Consider the following 449-residue polypeptide: GTP-binding protein A (449 aa).

The interval 1–77 (MFNINPYKSK…LSSKTENSLS (77 aa)) is disordered. Composition is skewed to low complexity over residues 8–46 (KSKTTKSSSSSSASPKSSKISNVSGSGSSSSSSSSSSSS) and 67–77 (SLSSKTENSLS). The AIG1-type G domain occupies 149–386 (QNECNVLLLG…FMGHLRAKNK (238 aa)). Positions 158 to 165 (GRTGVGKS) are G1. 158–165 (GRTGVGKS) is a GTP binding site. The interval 183 to 187 (SCTQD) is G2. The tract at residues 204–207 (DTPG) is G3. Residues 275 to 278 (TYAN) are G4. The G5 stretch occupies residues 336 to 338 (ENS).

It belongs to the TRAFAC class TrmE-Era-EngA-EngB-Septin-like GTPase superfamily. AIG1/Toc34/Toc159-like paraseptin GTPase family. IAN subfamily.

The sequence is that of GTP-binding protein A (gtpA) from Dictyostelium discoideum (Social amoeba).